A 190-amino-acid chain; its full sequence is Crossover junction endodeoxyribonuclease RuvC (190 aa).

Catalysis depends on residues D7, E67, and D140. 3 residues coordinate Mg(2+): D7, E67, and D140.

The protein belongs to the RuvC family. In terms of assembly, homodimer which binds Holliday junction (HJ) DNA. The HJ becomes 2-fold symmetrical on binding to RuvC with unstacked arms; it has a different conformation from HJ DNA in complex with RuvA. In the full resolvosome a probable DNA-RuvA(4)-RuvB(12)-RuvC(2) complex forms which resolves the HJ. Mg(2+) is required as a cofactor.

The protein resides in the cytoplasm. The catalysed reaction is Endonucleolytic cleavage at a junction such as a reciprocal single-stranded crossover between two homologous DNA duplexes (Holliday junction).. Its function is as follows. The RuvA-RuvB-RuvC complex processes Holliday junction (HJ) DNA during genetic recombination and DNA repair. Endonuclease that resolves HJ intermediates. Cleaves cruciform DNA by making single-stranded nicks across the HJ at symmetrical positions within the homologous arms, yielding a 5'-phosphate and a 3'-hydroxyl group; requires a central core of homology in the junction. The consensus cleavage sequence is 5'-(A/T)TT(C/G)-3'. Cleavage occurs on the 3'-side of the TT dinucleotide at the point of strand exchange. HJ branch migration catalyzed by RuvA-RuvB allows RuvC to scan DNA until it finds its consensus sequence, where it cleaves and resolves the cruciform DNA. The chain is Crossover junction endodeoxyribonuclease RuvC from Fusobacterium nucleatum subsp. nucleatum (strain ATCC 25586 / DSM 15643 / BCRC 10681 / CIP 101130 / JCM 8532 / KCTC 2640 / LMG 13131 / VPI 4355).